A 273-amino-acid chain; its full sequence is 3-methyl-2-oxobutanoate hydroxymethyltransferase 1 (273 aa).

Positions 49 and 88 each coordinate Mg(2+). Residues 49-50 (DS), Asp88, and Lys118 each bind 3-methyl-2-oxobutanoate. A Mg(2+)-binding site is contributed by Glu120. The active-site Proton acceptor is the Glu187.

It belongs to the PanB family. As to quaternary structure, homodecamer; pentamer of dimers. Mg(2+) serves as cofactor.

It is found in the cytoplasm. The enzyme catalyses 3-methyl-2-oxobutanoate + (6R)-5,10-methylene-5,6,7,8-tetrahydrofolate + H2O = 2-dehydropantoate + (6S)-5,6,7,8-tetrahydrofolate. The protein operates within cofactor biosynthesis; (R)-pantothenate biosynthesis; (R)-pantoate from 3-methyl-2-oxobutanoate: step 1/2. Its function is as follows. Catalyzes the reversible reaction in which hydroxymethyl group from 5,10-methylenetetrahydrofolate is transferred onto alpha-ketoisovalerate to form ketopantoate. In Pseudomonas aeruginosa (strain UCBPP-PA14), this protein is 3-methyl-2-oxobutanoate hydroxymethyltransferase 1.